We begin with the raw amino-acid sequence, 370 residues long: Histidinol-phosphate aminotransferase 1 (370 aa).

Lys222 carries the N6-(pyridoxal phosphate)lysine modification.

The protein belongs to the class-II pyridoxal-phosphate-dependent aminotransferase family. Histidinol-phosphate aminotransferase subfamily. In terms of assembly, homodimer. Pyridoxal 5'-phosphate is required as a cofactor.

The enzyme catalyses L-histidinol phosphate + 2-oxoglutarate = 3-(imidazol-4-yl)-2-oxopropyl phosphate + L-glutamate. Its pathway is amino-acid biosynthesis; L-histidine biosynthesis; L-histidine from 5-phospho-alpha-D-ribose 1-diphosphate: step 7/9. This chain is Histidinol-phosphate aminotransferase 1, found in Bacillus cereus (strain ATCC 10987 / NRS 248).